The primary structure comprises 442 residues: Probable carboxypeptidase PABG_01461 (442 aa).

Positions 1-20 (MKLQYLVALLSVQAVPPVTA) are cleaved as a signal peptide. N-linked (GlcNAc...) asparagine glycosylation is present at Asn102. Asp160 is a binding site for Zn(2+). Glu192 serves as the catalytic Proton acceptor. Glu193 contacts Zn(2+). N-linked (GlcNAc...) asparagine glycosylation occurs at Asn343.

The protein belongs to the peptidase M20A family. It depends on Zn(2+) as a cofactor.

The protein localises to the secreted. The protein is Probable carboxypeptidase PABG_01461 of Paracoccidioides brasiliensis (strain Pb03).